A 347-amino-acid polypeptide reads, in one-letter code: Protein pelota homolog (347 aa).

This sequence belongs to the eukaryotic release factor 1 family. Pelota subfamily. Monomer. A divalent metal cation serves as cofactor.

It localises to the cytoplasm. In terms of biological role, may function in recognizing stalled ribosomes, interact with stem-loop structures in stalled mRNA molecules, and effect endonucleolytic cleavage of the mRNA. May play a role in the release non-functional ribosomes and degradation of damaged mRNAs. Has endoribonuclease activity. The chain is Protein pelota homolog from Methanothrix thermoacetophila (strain DSM 6194 / JCM 14653 / NBRC 101360 / PT) (Methanosaeta thermophila).